We begin with the raw amino-acid sequence, 401 residues long: Membrane protein UL43 homolog (401 aa).

Helical transmembrane passes span 43-63, 67-87, 93-113, 124-144, 159-179, 182-202, 259-279, 294-314, 332-352, and 379-399; these read FVGI…IDLL, STCL…RVPI, IVTV…SVWV, LIVV…ISLF, ASLL…LVEL, VPIG…FGLA, PGVI…WIVL, YVVF…QLVI, AVCM…SLAF, and ISRW…ATII.

This sequence belongs to the alphaherpesvirinae HHV-1 UL43 family.

The protein localises to the membrane. This chain is Membrane protein UL43 homolog, found in Equine herpesvirus 1 (strain Ab4p) (EHV-1).